The sequence spans 50 residues: Apoptotic protease-activating factor 1 (50 aa).

The 31-residue stretch at 1 to 31 (ILKKDNYSYISFYNALIHEGYKDLAALLHSG) folds into the CARD domain. Residues 46 to 50 (GGITS) form the NB-ARC domain.

In terms of assembly, monomer. Oligomerizes to a heptameric ring, known as the apoptosome, upon binding of cytochrome c and dATP. Oligomeric Apaf-1 and pro-caspase-9 bind to each other via their respective NH2-terminal CARD domains and consecutively mature caspase-9 is released from the complex. Interacts with APIP. Interacts (via CARD and NACHT domains) with NAIP/BIRC1 (via NACHT domain). Interacts with CIAO2A.

Its function is as follows. Oligomeric Apaf-1 mediates the cytochrome c-dependent autocatalytic activation of pro-caspase 9 (Apaf-3), leading to the activation of caspase-3 and apoptosis. This activation requires ATP. This is Apoptotic protease-activating factor 1 (APAF1) from Canis lupus familiaris (Dog).